Consider the following 97-residue polypeptide: Secreted Ly-6/uPAR domain-containing protein 2 (97 aa).

Positions 1–22 (MQFHTGLLLAAVLSLQLAAAQA) are cleaved as a signal peptide. The 73-residue stretch at 23-95 (LWCHQCTGFG…IACCQTSLCN (73 aa)) folds into the UPAR/Ly6 domain. Disulfide bonds link Cys-25/Cys-47, Cys-28/Cys-34, Cys-40/Cys-68, Cys-72/Cys-88, and Cys-89/Cys-94.

In terms of assembly, interacts with CHRNA3, CHRNA4, CHRNA5, CHRNA7, CHRNB2 and CHRNB4. Interacts with CHRM1 and CHRM3 probably in an allosteric manner.

The protein localises to the secreted. Functionally, binds and may modulate the functional properties of nicotinic and muscarinic acetylcholine receptors. May regulate keratinocytes proliferation, differentiation and apoptosis. In vitro moderately inhibits ACh-evoked currents of alpha-3:beta-2-containing nAChRs, strongly these of alpha-4:beta-2-containing nAChRs, modulates alpha-7-containing nAChRs, and inhibits nicotine-induced signaling probably implicating alpha-3:beta-4-containing nAChRs. Proposed to act on alpha-3:beta-2 and alpha-7 nAChRs in an orthosteric, and on mAChRs, such as CHRM1 and CHRM3, in an allosteric manner. The sequence is that of Secreted Ly-6/uPAR domain-containing protein 2 from Macaca mulatta (Rhesus macaque).